Here is a 218-residue protein sequence, read N- to C-terminus: Thiopurine S-methyltransferase (218 aa).

Residues W10, L45, E66, and R123 each coordinate S-adenosyl-L-methionine.

This sequence belongs to the class I-like SAM-binding methyltransferase superfamily. TPMT family.

It is found in the cytoplasm. It carries out the reaction S-adenosyl-L-methionine + a thiopurine = S-adenosyl-L-homocysteine + a thiopurine S-methylether.. The chain is Thiopurine S-methyltransferase from Pseudomonas aeruginosa (strain ATCC 15692 / DSM 22644 / CIP 104116 / JCM 14847 / LMG 12228 / 1C / PRS 101 / PAO1).